Here is a 105-residue protein sequence, read N- to C-terminus: Circadian clock oscillator protein KaiB (105 aa).

The protein belongs to the KaiB family. As to quaternary structure, may undergo a major conformational rearrangment; in the free state forms homooligomers. When bound to KaiC switches to a monomeric thioredoxin-fold (KaiB(fs)). The active oscillator complex is probably KaiC(6):KaiB(6).

Its function is as follows. Component of the KaiBC clock protein complex, which constitutes the main circadian regulator in cyanobacteria; it may modify the ATPase activity of KaiC. Functionally, may be a metamorphic protein which reversibly switches between an inactive tetrameric fold and a rare, thioredoxin-like monomeric fold (KaiB(fs)). KaiB(fs) binds phospho-KaiC, and perhaps clock output effectors. In Prochlorococcus marinus (strain MIT 9312), this protein is Circadian clock oscillator protein KaiB.